The primary structure comprises 379 residues: Galactose-1-phosphate uridylyltransferase (379 aa).

The interval 1–21 (MSRSGTDPQQRQQASEADAAA) is disordered. Residues 9 to 21 (QQRQQASEADAAA) are compositionally biased toward low complexity. Cys75 lines the Zn(2+) pocket. Residues Ala81, 97-98 (ND), and Asn173 each bind UDP-alpha-D-glucose. Zn(2+) is bound at residue His184. The Tele-UMP-histidine intermediate role is filled by His186. UDP-alpha-D-glucose is bound at residue Gln188. The Zn(2+) site is built by Glu202, His301, His319, and His321. Residues 334 to 337 (KFMV) and 339 to 340 (YE) each bind UDP-alpha-D-glucose.

Belongs to the galactose-1-phosphate uridylyltransferase type 1 family. As to quaternary structure, homodimer. The cofactor is Zn(2+).

It carries out the reaction alpha-D-galactose 1-phosphate + UDP-alpha-D-glucose = alpha-D-glucose 1-phosphate + UDP-alpha-D-galactose. Its pathway is carbohydrate metabolism; galactose metabolism. Plays an important role in galactose metabolism. This is Galactose-1-phosphate uridylyltransferase (GALT) from Homo sapiens (Human).